We begin with the raw amino-acid sequence, 391 residues long: Formate-dependent phosphoribosylglycinamide formyltransferase (391 aa).

N(1)-(5-phospho-beta-D-ribosyl)glycinamide is bound by residues 20 to 21 and E80; that span reads EL. Residues R112, K153, 158-163, 193-196, and E201 contribute to the ATP site; these read SSGKGQ and EGFV. Positions 117–306 constitute an ATP-grasp domain; it reads RLAAEELQLP…EFALHVRAFT (190 aa). Residues E265 and E277 each coordinate Mg(2+). N(1)-(5-phospho-beta-D-ribosyl)glycinamide-binding positions include D284, K354, and 361 to 362; that span reads RR.

The protein belongs to the PurK/PurT family. In terms of assembly, homodimer.

It carries out the reaction N(1)-(5-phospho-beta-D-ribosyl)glycinamide + formate + ATP = N(2)-formyl-N(1)-(5-phospho-beta-D-ribosyl)glycinamide + ADP + phosphate + H(+). Its pathway is purine metabolism; IMP biosynthesis via de novo pathway; N(2)-formyl-N(1)-(5-phospho-D-ribosyl)glycinamide from N(1)-(5-phospho-D-ribosyl)glycinamide (formate route): step 1/1. Its function is as follows. Involved in the de novo purine biosynthesis. Catalyzes the transfer of formate to 5-phospho-ribosyl-glycinamide (GAR), producing 5-phospho-ribosyl-N-formylglycinamide (FGAR). Formate is provided by PurU via hydrolysis of 10-formyl-tetrahydrofolate. This is Formate-dependent phosphoribosylglycinamide formyltransferase from Aliivibrio fischeri (strain ATCC 700601 / ES114) (Vibrio fischeri).